Here is a 178-residue protein sequence, read N- to C-terminus: Imidazoleglycerol-phosphate dehydratase (178 aa).

The protein belongs to the imidazoleglycerol-phosphate dehydratase family.

It is found in the cytoplasm. It catalyses the reaction D-erythro-1-(imidazol-4-yl)glycerol 3-phosphate = 3-(imidazol-4-yl)-2-oxopropyl phosphate + H2O. It functions in the pathway amino-acid biosynthesis; L-histidine biosynthesis; L-histidine from 5-phospho-alpha-D-ribose 1-diphosphate: step 6/9. The protein is Imidazoleglycerol-phosphate dehydratase of Archaeoglobus fulgidus (strain ATCC 49558 / DSM 4304 / JCM 9628 / NBRC 100126 / VC-16).